The chain runs to 373 residues: WAT1-related protein At4g30420 (373 aa).

Helical transmembrane passes span 2–22 (AMTM…ATLV), 29–49 (VFIL…LYLS), 55–75 (IAIS…SLIG), 94–114 (MGSA…FLAG), 125–145 (GLAK…MTLL), 173–193 (WLIG…WLIL), 205–225 (LSLS…VTFF), 244–264 (CLYA…WAIA), 270–290 (FSAL…ALFF), and 294–314 (IYTG…TVLW). EamA domains lie at 9–135 (CYAG…TILC) and 186–313 (CWSF…YTVL).

It belongs to the drug/metabolite transporter (DMT) superfamily. Plant drug/metabolite exporter (P-DME) (TC 2.A.7.4) family.

The protein localises to the membrane. The protein is WAT1-related protein At4g30420 of Arabidopsis thaliana (Mouse-ear cress).